Reading from the N-terminus, the 262-residue chain is Transmembrane protein 106A (262 aa).

Residues 95-115 (FVFLAVLICLVTSSFIVFFLF) traverse the membrane as a helical segment.

The protein belongs to the TMEM106 family. In terms of tissue distribution, expressed in renal cells (at protein level). Expressed in epithelial cells.

The protein resides in the cell membrane. In terms of biological role, activates macrophages and polarizes them into M1-like macrophages through the activation of the MAPK and NF-kappaB signaling pathway. Upon activation, up-regulates the expression of CD80, CD86, CD69 and MHC II on macrophages, and induces the release of pro-inflammatory cytokines such as TNF, IL1B, IL6, CCL2 and nitric oxide. May play a role in inhibition of proliferation and migration. This Homo sapiens (Human) protein is Transmembrane protein 106A (TMEM106A).